Consider the following 232-residue polypeptide: Large ribosomal subunit protein uL1 (232 aa).

The protein belongs to the universal ribosomal protein uL1 family. As to quaternary structure, part of the 50S ribosomal subunit.

In terms of biological role, binds directly to 23S rRNA. The L1 stalk is quite mobile in the ribosome, and is involved in E site tRNA release. Its function is as follows. Protein L1 is also a translational repressor protein, it controls the translation of the L11 operon by binding to its mRNA. In Burkholderia vietnamiensis (strain G4 / LMG 22486) (Burkholderia cepacia (strain R1808)), this protein is Large ribosomal subunit protein uL1.